Here is a 778-residue protein sequence, read N- to C-terminus: Molybdenum cofactor sulfurase (778 aa).

K235 is subject to N6-(pyridoxal phosphate)lysine. The active site involves C399. Disordered stretches follow at residues 576 to 596 (LSKNPSLFRSSSSRSRSSRVC) and 654 to 673 (ARPALPGSFPPSPPDSDTEK). The span at 584-594 (RSSSSRSRSSR) shows a compositional bias: low complexity. Residues 651-778 (LPTARPALPG…ETAERARSRL (128 aa)) enclose the MOSC domain.

This sequence belongs to the class-V pyridoxal-phosphate-dependent aminotransferase family. MOCOS subfamily. It depends on pyridoxal 5'-phosphate as a cofactor.

The enzyme catalyses Mo-molybdopterin + L-cysteine + AH2 = thio-Mo-molybdopterin + L-alanine + A + H2O. Its pathway is cofactor biosynthesis; molybdopterin biosynthesis. In terms of biological role, sulfurates the molybdenum cofactor. Sulfation of molybdenum is essential for xanthine dehydrogenase (XDH) and aldehyde oxidase (ADO) enzymes in which molybdenum cofactor is liganded by 1 oxygen and 1 sulfur atom in active form. The chain is Molybdenum cofactor sulfurase from Chaetomium globosum (strain ATCC 6205 / CBS 148.51 / DSM 1962 / NBRC 6347 / NRRL 1970) (Soil fungus).